A 276-amino-acid polypeptide reads, in one-letter code: Dermonecrotic toxin LlSicTox-alphaIV2iii (276 aa).

Residue H5 is part of the active site. Mg(2+)-binding residues include E25 and D27. The active-site Nucleophile is H41. 2 disulfide bridges follow: C45–C51 and C47–C193. D85 lines the Mg(2+) pocket.

The protein belongs to the arthropod phospholipase D family. Class II subfamily. Mg(2+) is required as a cofactor. As to expression, expressed by the venom gland.

Its subcellular location is the secreted. It catalyses the reaction an N-(acyl)-sphingosylphosphocholine = an N-(acyl)-sphingosyl-1,3-cyclic phosphate + choline. It carries out the reaction an N-(acyl)-sphingosylphosphoethanolamine = an N-(acyl)-sphingosyl-1,3-cyclic phosphate + ethanolamine. The catalysed reaction is a 1-acyl-sn-glycero-3-phosphocholine = a 1-acyl-sn-glycero-2,3-cyclic phosphate + choline. The enzyme catalyses a 1-acyl-sn-glycero-3-phosphoethanolamine = a 1-acyl-sn-glycero-2,3-cyclic phosphate + ethanolamine. Dermonecrotic toxins cleave the phosphodiester linkage between the phosphate and headgroup of certain phospholipids (sphingolipid and lysolipid substrates), forming an alcohol (often choline) and a cyclic phosphate. This toxin acts on sphingomyelin (SM). It may also act on ceramide phosphoethanolamine (CPE), lysophosphatidylcholine (LPC) and lysophosphatidylethanolamine (LPE), but not on lysophosphatidylserine (LPS), and lysophosphatidylglycerol (LPG). It acts by transphosphatidylation, releasing exclusively cyclic phosphate products as second products. Induces dermonecrosis, hemolysis, increased vascular permeability, edema, inflammatory response, and platelet aggregation. The protein is Dermonecrotic toxin LlSicTox-alphaIV2iii of Loxosceles laeta (South American recluse spider).